Consider the following 286-residue polypeptide: Polyamine aminopropyltransferase (286 aa).

A PABS domain is found at 5–238 (TMWHETLHDQ…GIMTFAWATD (234 aa)). S-methyl-5'-thioadenosine is bound at residue glutamine 33. 2 residues coordinate spermidine: histidine 64 and aspartate 88. S-methyl-5'-thioadenosine-binding positions include glutamate 108 and 140–141 (DG). The Proton acceptor role is filled by aspartate 158. 158 to 161 (DCTD) contributes to the spermidine binding site. Proline 165 is an S-methyl-5'-thioadenosine binding site.

The protein belongs to the spermidine/spermine synthase family. In terms of assembly, homodimer or homotetramer.

Its subcellular location is the cytoplasm. The catalysed reaction is S-adenosyl 3-(methylsulfanyl)propylamine + putrescine = S-methyl-5'-thioadenosine + spermidine + H(+). It functions in the pathway amine and polyamine biosynthesis; spermidine biosynthesis; spermidine from putrescine: step 1/1. Catalyzes the irreversible transfer of a propylamine group from the amino donor S-adenosylmethioninamine (decarboxy-AdoMet) to putrescine (1,4-diaminobutane) to yield spermidine. This is Polyamine aminopropyltransferase from Salmonella schwarzengrund (strain CVM19633).